We begin with the raw amino-acid sequence, 813 residues long: Leucine--tRNA ligase (813 aa).

Residues 42 to 52 carry the 'HIGH' region motif; it reads PYTSGNLHIGH. The 'KMSKS' region motif lies at 580–584; sequence KMSKS. Lysine 583 contributes to the ATP binding site.

It belongs to the class-I aminoacyl-tRNA synthetase family.

It localises to the cytoplasm. It catalyses the reaction tRNA(Leu) + L-leucine + ATP = L-leucyl-tRNA(Leu) + AMP + diphosphate. This Dehalococcoides mccartyi (strain ATCC BAA-2100 / JCM 16839 / KCTC 5957 / BAV1) protein is Leucine--tRNA ligase.